The sequence spans 382 residues: Gap junction alpha-1 protein (382 aa).

At 2–23 the chain is on the cytoplasmic side; the sequence is GDWSALGKLLDKVQAYSTAGGK. Position 5 is a phosphoserine (serine 5). The chain crosses the membrane as a helical span at residues 24–44; the sequence is VWLSVLFIFRILLLGTAVESA. The Extracellular segment spans residues 45–76; that stretch reads WGDEQSAFRCNTQQPGCENVCYDKSFPISHVR. Cystine bridges form between cysteine 54–cysteine 192 and cysteine 187–cysteine 198. The helical transmembrane segment at 77–97 threads the bilayer; it reads FWVLQIIFVSVPTLLYLAHVF. Over 98–155 the chain is Cytoplasmic; that stretch reads YVMRKEEKLNKKEEELKVAQTDGANVDMHLKQIEIKKFKYGIEEHGKVKMRGGLLRTY. Lysine 144 participates in a covalent cross-link: Glycyl lysine isopeptide (Lys-Gly) (interchain with G-Cter in SUMO). Residues 156–176 traverse the membrane as a helical segment; the sequence is IISILFKSVFEVAFLLIQWYI. Residues 177 to 207 lie on the Extracellular side of the membrane; that stretch reads YGFSLSAVYTCKRDPCPHQVDCFLSRPTEKT. Residues 208-228 form a helical membrane-spanning segment; the sequence is IFIIFMLVVSLVSLALNIIEL. The Cytoplasmic portion of the chain corresponds to 229 to 382; it reads FYVFFKGIKD…SRPRPDDLEI (154 aa). Lysine 237 is covalently cross-linked (Glycyl lysine isopeptide (Lys-Gly) (interchain with G-Cter in SUMO)). Residues 244–382 are interaction with NOV; it reads SDLYHATTGP…SRPRPDDLEI (139 aa). Tyrosine 247 carries the phosphotyrosine modification. Residues serine 255, serine 257, and serine 262 each carry the phosphoserine modification. An interaction with UBQLN4 region spans residues 264 to 382; it reads TYAYFNGCSS…SRPRPDDLEI (119 aa). Position 271 is an S-nitrosocysteine (cysteine 271). Phosphothreonine is present on threonine 275. Phosphoserine occurs at positions 306 and 314. A compositionally biased stretch (polar residues) spans 317–332; the sequence is QNRMGQAGSTISNSHA. The tract at residues 317–382 is disordered; it reads QNRMGQAGST…SRPRPDDLEI (66 aa). A Phosphoserine; by CK1 modification is found at serine 325. The residue at position 326 (threonine 326) is a Phosphothreonine. A phosphoserine; by CK1 mark is found at serine 328 and serine 330. Phosphoserine is present on residues serine 344 and serine 365. Positions 362–374 are enriched in low complexity; sequence RPSSRASSRASSR. Phosphoserine; by PKC/PRKCG and PKC/PRKCD is present on serine 368. Phosphoserine occurs at positions 369 and 373.

It belongs to the connexin family. Alpha-type (group II) subfamily. In terms of assembly, a connexon is composed of a hexamer of connexins. Interacts with SGSM3. Interacts with RIC1/CIP150. Interacts with CNST and CSNK1D. Interacts (via C-terminus) with TJP1. Interacts (via C-terminus) with SRC (via SH3 domain). Interacts (not ubiquitinated) with UBQLN4 (via UBA domain). Interacts with NOV. Interacts with TMEM65. Interacts with ANK3/ANKG and PKP2. Phosphorylation at Ser-325, Ser-328 and Ser-330 by CK1 modulates gap junction assembly. Phosphorylated at Ser-368 by PRKCG; phosphorylation induces disassembly of gap junction plaques and inhibition of gap junction activity. Phosphorylation at Ser-368 by PRKCD triggers its internalization into small vesicles leading to proteasome-mediated degradation. In terms of processing, sumoylated with SUMO1, SUMO2 and SUMO3, which may regulate the level of functional Cx43 gap junctions at the plasma membrane. May be desumoylated by SENP1 or SENP2. Post-translationally, S-nitrosylation at Cys-271 is enriched at the muscle endothelial gap junction in arteries, it augments channel permeability and may regulate of smooth muscle cell to endothelial cell communication. Acetylated in the developing cortex; leading to delocalization from the cell membrane.

It is found in the cell membrane. Its subcellular location is the cell junction. The protein localises to the gap junction. The protein resides in the endoplasmic reticulum. In terms of biological role, gap junction protein that acts as a regulator of bladder capacity. A gap junction consists of a cluster of closely packed pairs of transmembrane channels, the connexons, through which materials of low MW diffuse from one cell to a neighboring cell. May play a critical role in the physiology of hearing by participating in the recycling of potassium to the cochlear endolymph. Negative regulator of bladder functional capacity: acts by enhancing intercellular electrical and chemical transmission, thus sensitizing bladder muscles to cholinergic neural stimuli and causing them to contract. May play a role in cell growth inhibition through the regulation of NOV expression and localization. Plays an essential role in gap junction communication in the ventricles. This is Gap junction alpha-1 protein (GJA1) from Erinaceus europaeus (Western European hedgehog).